The sequence spans 271 residues: Dermonecrotic toxin LhSicTox-alphaIA2bv (271 aa).

His-3 is a catalytic residue. Residues Glu-23 and Asp-25 each coordinate Mg(2+). 2 disulfides stabilise this stretch: Cys-43–Cys-49 and Cys-45–Cys-188. Asp-83 provides a ligand contact to Mg(2+).

It belongs to the arthropod phospholipase D family. Class II subfamily. The cofactor is Mg(2+). Expressed by the venom gland.

It localises to the secreted. It catalyses the reaction an N-(acyl)-sphingosylphosphocholine = an N-(acyl)-sphingosyl-1,3-cyclic phosphate + choline. The enzyme catalyses an N-(acyl)-sphingosylphosphoethanolamine = an N-(acyl)-sphingosyl-1,3-cyclic phosphate + ethanolamine. The catalysed reaction is a 1-acyl-sn-glycero-3-phosphocholine = a 1-acyl-sn-glycero-2,3-cyclic phosphate + choline. It carries out the reaction a 1-acyl-sn-glycero-3-phosphoethanolamine = a 1-acyl-sn-glycero-2,3-cyclic phosphate + ethanolamine. In terms of biological role, dermonecrotic toxins cleave the phosphodiester linkage between the phosphate and headgroup of certain phospholipids (sphingolipid and lysolipid substrates), forming an alcohol (often choline) and a cyclic phosphate. This toxin acts on sphingomyelin (SM). It may also act on ceramide phosphoethanolamine (CPE), lysophosphatidylcholine (LPC) and lysophosphatidylethanolamine (LPE), but not on lysophosphatidylserine (LPS), and lysophosphatidylglycerol (LPG). It acts by transphosphatidylation, releasing exclusively cyclic phosphate products as second products. Induces dermonecrosis, hemolysis, increased vascular permeability, edema, inflammatory response, and platelet aggregation. The sequence is that of Dermonecrotic toxin LhSicTox-alphaIA2bv from Loxosceles hirsuta (Recluse spider).